We begin with the raw amino-acid sequence, 637 residues long: 1-deoxy-D-xylulose-5-phosphate synthase (637 aa).

Thiamine diphosphate is bound by residues H73 and 113–115; that span reads SHA. D144 provides a ligand contact to Mg(2+). Thiamine diphosphate is bound by residues 145 to 146, N174, Y285, and E366; that span reads GA. N174 serves as a coordination point for Mg(2+).

Belongs to the transketolase family. DXPS subfamily. Homodimer. Mg(2+) serves as cofactor. Requires thiamine diphosphate as cofactor.

It catalyses the reaction D-glyceraldehyde 3-phosphate + pyruvate + H(+) = 1-deoxy-D-xylulose 5-phosphate + CO2. The protein operates within metabolic intermediate biosynthesis; 1-deoxy-D-xylulose 5-phosphate biosynthesis; 1-deoxy-D-xylulose 5-phosphate from D-glyceraldehyde 3-phosphate and pyruvate: step 1/1. In terms of biological role, catalyzes the acyloin condensation reaction between C atoms 2 and 3 of pyruvate and glyceraldehyde 3-phosphate to yield 1-deoxy-D-xylulose-5-phosphate (DXP). In Streptomyces griseus subsp. griseus (strain JCM 4626 / CBS 651.72 / NBRC 13350 / KCC S-0626 / ISP 5235), this protein is 1-deoxy-D-xylulose-5-phosphate synthase.